A 125-amino-acid polypeptide reads, in one-letter code: Small ribosomal subunit protein eS8 (125 aa).

The span at 1-11 (MAISQGKSTRL) shows a compositional bias: polar residues. The disordered stretch occupies residues 1–38 (MAISQGKSTRLPSGARNVANRGKRKAELGRDPAETRVD). The span at 25-38 (KAELGRDPAETRVD) shows a compositional bias: basic and acidic residues.

The protein belongs to the eukaryotic ribosomal protein eS8 family. Part of the 30S ribosomal subunit.

This chain is Small ribosomal subunit protein eS8, found in Methanobrevibacter smithii (strain ATCC 35061 / DSM 861 / OCM 144 / PS).